An 802-amino-acid chain; its full sequence is Putative transcriptional regulator cudA (802 aa).

Disordered stretches follow at residues 1-148 (MNQS…PSAI), 154-173 (ISNN…NLLL), 381-446 (NNIN…NNEN), and 636-658 (QPQQ…QQGQ). Residues 25–63 (NNNNNGNNGMMMNQQQMQQHVVPHLHHLQQQQQQPQQQQ) show a composition bias toward low complexity. Positions 69 to 88 (DYSNSPNGTTNGSTMSPNCI) are enriched in polar residues. Positions 89 to 128 (NTNNNNNNNNNNNNNSNNNNNNNNNASNNLTSNKSSSTNT) are enriched in low complexity. Residues 129 to 142 (PQIGQLQASPANLT) are compositionally biased toward polar residues. Residues 381 to 445 (NNINNNNNIN…CNNNNNNNNE (65 aa)) are compositionally biased toward low complexity.

As to expression, expressed in the prestalk cells that constitute the slug tip (pstA cells) and in prespore cells (at protein level). Not expressed in the band of prestalk cells that lies behind the slug tip (pstO cells). Highly expressed in pstO derived papilla cells during culmination.

The protein resides in the nucleus. It is found in the nucleoplasm. Its function is as follows. Essential for normal culmination. May function as a transcriptional regulator. This Dictyostelium discoideum (Social amoeba) protein is Putative transcriptional regulator cudA (cudA).